Consider the following 473-residue polypeptide: 3-isopropylmalate dehydratase large subunit (473 aa).

3 residues coordinate [4Fe-4S] cluster: cysteine 355, cysteine 415, and cysteine 418. A disordered region spans residues 423 to 452; sequence PDQLAPGERSASTSNRNFEGRQGKGGRTHL.

Belongs to the aconitase/IPM isomerase family. LeuC type 1 subfamily. In terms of assembly, heterodimer of LeuC and LeuD. Requires [4Fe-4S] cluster as cofactor.

It catalyses the reaction (2R,3S)-3-isopropylmalate = (2S)-2-isopropylmalate. The protein operates within amino-acid biosynthesis; L-leucine biosynthesis; L-leucine from 3-methyl-2-oxobutanoate: step 2/4. Its function is as follows. Catalyzes the isomerization between 2-isopropylmalate and 3-isopropylmalate, via the formation of 2-isopropylmaleate. This is 3-isopropylmalate dehydratase large subunit from Corynebacterium jeikeium (strain K411).